The following is a 74-amino-acid chain: Conotoxin Vc6.8 (74 aa).

An N-terminal signal peptide occupies residues 1–19 (MEKLTILLLVAAVLMSTQA). Residues 20-34 (LMQEQRQKAKINLFS) constitute a propeptide that is removed on maturation. Cystine bridges form between C49/C62, C55/C66, and C61/C70.

Belongs to the conotoxin O2 superfamily. Expressed by the venom duct.

The protein localises to the secreted. In terms of biological role, inhibits voltage-gated ion channels. In Conus victoriae (Queen Victoria cone), this protein is Conotoxin Vc6.8.